The following is a 376-amino-acid chain: 28S rRNA (uridine-N(3))-methyltransferase (376 aa).

2 disordered regions span residues 1-33 (MAER…EEKK) and 49-71 (AQEE…DRGR). A compositionally biased stretch (basic and acidic residues) spans 15 to 33 (HGQRIEWRKWKQQKKEEKK). Residues threonine 289, arginine 292, glycine 312, asparagine 341, and threonine 342 each coordinate S-adenosyl-L-homocysteine. Positions 292, 312, 341, and 342 each coordinate S-adenosyl-L-methionine.

It belongs to the class IV-like SAM-binding methyltransferase superfamily. Interacts with INCA1.

It is found in the cytoplasm. Its subcellular location is the cytoskeleton. It localises to the spindle. The protein localises to the chromosome. The protein resides in the centromere. It is found in the kinetochore. Its subcellular location is the microtubule organizing center. It localises to the centrosome. It catalyses the reaction uridine in 28S rRNA + S-adenosyl-L-methionine = N(3)-methyluridine in 28S rRNA + S-adenosyl-L-homocysteine + H(+). In terms of biological role, S-adenosyl-L-methionine-dependent methyltransferase that specifically methylates the N3 position of a uridine in 28S rRNA. Required for association of the centrosomes with the poles of the bipolar mitotic spindle during metaphase. Also involved in chromosome alignment. May promote centrosome maturation probably by recruiting A-kinase anchor protein AKAP9 to centrosomes in early mitosis. Binds specifically to miRNA MIR145 hairpin, regulates MIR145 expression at a postranscriptional level. In Homo sapiens (Human), this protein is 28S rRNA (uridine-N(3))-methyltransferase.